The chain runs to 568 residues: Phosphomethylpyrimidine synthase (568 aa).

Residues asparagine 188, methionine 217, tyrosine 246, histidine 282, serine 302–glycine 304, aspartate 343–arginine 346, and glutamate 382 each bind substrate. Histidine 386 contacts Zn(2+). Position 409 (tyrosine 409) interacts with substrate. Histidine 450 is a Zn(2+) binding site. Cysteine 530, cysteine 533, and cysteine 538 together coordinate [4Fe-4S] cluster.

It belongs to the ThiC family. As to quaternary structure, homodimer. It depends on [4Fe-4S] cluster as a cofactor.

It carries out the reaction 5-amino-1-(5-phospho-beta-D-ribosyl)imidazole + S-adenosyl-L-methionine = 4-amino-2-methyl-5-(phosphooxymethyl)pyrimidine + CO + 5'-deoxyadenosine + formate + L-methionine + 3 H(+). The protein operates within cofactor biosynthesis; thiamine diphosphate biosynthesis. Functionally, catalyzes the synthesis of the hydroxymethylpyrimidine phosphate (HMP-P) moiety of thiamine from aminoimidazole ribotide (AIR) in a radical S-adenosyl-L-methionine (SAM)-dependent reaction. This is Phosphomethylpyrimidine synthase from Idiomarina loihiensis (strain ATCC BAA-735 / DSM 15497 / L2-TR).